The following is a 337-amino-acid chain: Glyceraldehyde-3-phosphate dehydrogenase 2, cytosolic (337 aa).

Residues 1 to 151 (MGKIKIGING…YTSDVNIVSN (151 aa)) form a binding to NAD region. Residues 13–14 (RI), D35, and R82 each bind NAD(+). The segment at 152 to 337 (ASCTTNCLAP…DLIRHMFKTQ (186 aa)) is catalytic. Residues 153-155 (SCT), T184, 213-214 (TG), and R236 each bind D-glyceraldehyde 3-phosphate. Catalysis depends on C154, which acts as the Nucleophile. N318 is a binding site for NAD(+).

This sequence belongs to the glyceraldehyde-3-phosphate dehydrogenase family. Homotetramer. Developing seeds, seedling roots and shoots, and embryo.

Its subcellular location is the cytoplasm. The enzyme catalyses D-glyceraldehyde 3-phosphate + phosphate + NAD(+) = (2R)-3-phospho-glyceroyl phosphate + NADH + H(+). Its pathway is carbohydrate degradation; glycolysis; pyruvate from D-glyceraldehyde 3-phosphate: step 1/5. Its function is as follows. Key enzyme in glycolysis that catalyzes the first step of the pathway by converting D-glyceraldehyde 3-phosphate (G3P) into 3-phospho-D-glyceroyl phosphate. Essential for the maintenance of cellular ATP levels and carbohydrate metabolism. This chain is Glyceraldehyde-3-phosphate dehydrogenase 2, cytosolic (GAPC2), found in Zea mays (Maize).